Reading from the N-terminus, the 240-residue chain is uncharacterized protein (240 aa).

The active-site Proton acceptor is the Asp66. Residue Asp129 is part of the active site. The active-site Proton acceptor is His131.

The protein belongs to the glucosamine/galactosamine-6-phosphate isomerase family.

This is an uncharacterized protein from Escherichia coli (strain K12).